The primary structure comprises 602 residues: Leishmanolysin (602 aa).

The first 39 residues, methionine 1–alanine 39, serve as a signal peptide directing secretion. Positions histidine 40 to valine 100 are cleaved as a propeptide — activation peptide. 2 disulfides stabilise this stretch: cysteine 125–cysteine 142 and cysteine 191–cysteine 230. A Zn(2+)-binding site is contributed by histidine 264. The active site involves glutamate 265. Histidine 268 contributes to the Zn(2+) binding site. A glycan (N-linked (GlcNAc...) asparagine) is linked at asparagine 300. Cystine bridges form between cysteine 314–cysteine 386, cysteine 393–cysteine 455, cysteine 406–cysteine 425, cysteine 415–cysteine 489, cysteine 466–cysteine 510, cysteine 515–cysteine 565, and cysteine 535–cysteine 558. Histidine 334 serves as a coordination point for Zn(2+). Residue asparagine 407 is glycosylated (N-linked (GlcNAc...) asparagine). Residue asparagine 534 is glycosylated (N-linked (GlcNAc...) asparagine). The GPI-anchor amidated asparagine moiety is linked to residue asparagine 577. Positions threonine 578–leucine 602 are cleaved as a propeptide — removed in mature form.

It belongs to the peptidase M8 family. Zn(2+) is required as a cofactor. Post-translationally, the phosphatidylinositol moiety of the GPI-anchor contains a fully saturated, unbranched 1-O-alkyl chain (mainly C24:0) and a mixture of fully saturated unbranched 2-O-acyl chains (C12:0, C14:0, C16:0, and C18:0).

Its subcellular location is the cell membrane. It catalyses the reaction Preference for hydrophobic residues at P1 and P1' and basic residues at P2' and P3'. A model nonapeptide is cleaved at -Ala-Tyr-|-Leu-Lys-Lys-.. Its function is as follows. Has an integral role during the infection of macrophages in the mammalian host. The chain is Leishmanolysin (gp63) from Leishmania major.